Here is a 472-residue protein sequence, read N- to C-terminus: NALCN channel auxiliary factor 2 (472 aa).

A helical transmembrane segment spans residues 47-67; it reads LASLLFFTVLLADHLWLCAGA. Residues 77–114 form a disordered region; sequence AMRPPWGAGRERQPVPPRAVLPLPPPPPGEPSAPPGTC. Positions 90–110 are enriched in pro residues; that stretch reads PVPPRAVLPLPPPPPGEPSAP. Asparagine 120 and asparagine 193 each carry an N-linked (GlcNAc...) asparagine glycan. The helical transmembrane segment at 433–453 threads the bilayer; the sequence is LCVLVLMLLHTVVSFSSNQGG.

The protein belongs to the NALF family.

The protein resides in the membrane. Functionally, probable component of the NALCN channel complex, a channel that regulates the resting membrane potential and controls neuronal excitability. This Homo sapiens (Human) protein is NALCN channel auxiliary factor 2.